Consider the following 71-residue polypeptide: Small ribosomal subunit protein bS18 (71 aa).

Belongs to the bacterial ribosomal protein bS18 family. Part of the 30S ribosomal subunit. Forms a tight heterodimer with protein bS6.

Binds as a heterodimer with protein bS6 to the central domain of the 16S rRNA, where it helps stabilize the platform of the 30S subunit. This Microcystis aeruginosa (strain NIES-843 / IAM M-2473) protein is Small ribosomal subunit protein bS18.